Consider the following 376-residue polypeptide: Chaperone protein DnaJ (376 aa).

Positions 5–70 (DYYEILGVSK…QKRAAYDQYG (66 aa)) constitute a J domain. The segment at 131-209 (GVTKEIRIPT…CHGHGRVERS (79 aa)) adopts a CR-type zinc-finger fold. Zn(2+) is bound by residues C144, C147, C161, C164, C183, C186, C197, and C200. CXXCXGXG motif repeat units lie at residues 144 to 151 (CDVCHGSG), 161 to 168 (CPTCHGSG), 183 to 190 (CPHCQGRG), and 197 to 204 (CNKCHGHG).

This sequence belongs to the DnaJ family. As to quaternary structure, homodimer. Requires Zn(2+) as cofactor.

The protein localises to the cytoplasm. Participates actively in the response to hyperosmotic and heat shock by preventing the aggregation of stress-denatured proteins and by disaggregating proteins, also in an autonomous, DnaK-independent fashion. Unfolded proteins bind initially to DnaJ; upon interaction with the DnaJ-bound protein, DnaK hydrolyzes its bound ATP, resulting in the formation of a stable complex. GrpE releases ADP from DnaK; ATP binding to DnaK triggers the release of the substrate protein, thus completing the reaction cycle. Several rounds of ATP-dependent interactions between DnaJ, DnaK and GrpE are required for fully efficient folding. Also involved, together with DnaK and GrpE, in the DNA replication of plasmids through activation of initiation proteins. The polypeptide is Chaperone protein DnaJ (Escherichia coli O157:H7 (strain EC4115 / EHEC)).